The following is a 385-amino-acid chain: Putative cell agglutination protein pfl8 (385 aa).

The first 20 residues, 1–20, serve as a signal peptide directing secretion; the sequence is MNSYISLIFTLLFFTSAARS. The tract at residues 41–90 is disordered; sequence SSEFTSTITPETPSSSSSTFVPISTHTSSATNTTSGQLSISSSSSTSSEY. N72, N270, and N346 each carry an N-linked (GlcNAc...) asparagine glycan. The region spanning 196 to 360 is the PA14 domain; that stretch reads EVSTFNKPAY…GPVRTTSYSY (165 aa).

It localises to the secreted. The protein localises to the cell surface. Its function is as follows. May be involved in agglutination during conjugation or other aspects of colony formation. Induces flocculation when overexpressed. The protein is Putative cell agglutination protein pfl8 of Schizosaccharomyces pombe (strain 972 / ATCC 24843) (Fission yeast).